A 398-amino-acid polypeptide reads, in one-letter code: CCA-adding enzyme (398 aa).

ATP contacts are provided by Gly32 and Arg35. CTP-binding residues include Gly32 and Arg35. Positions 45 and 47 each coordinate Mg(2+). The ATP site is built by Arg119, Asp162, Arg165, Arg168, and Arg171. Positions 119, 162, 165, 168, and 171 each coordinate CTP.

It belongs to the tRNA nucleotidyltransferase/poly(A) polymerase family. Bacterial CCA-adding enzyme type 3 subfamily. In terms of assembly, homodimer. Mg(2+) serves as cofactor.

The catalysed reaction is a tRNA precursor + 2 CTP + ATP = a tRNA with a 3' CCA end + 3 diphosphate. It carries out the reaction a tRNA with a 3' CCA end + 2 CTP + ATP = a tRNA with a 3' CCACCA end + 3 diphosphate. Functionally, catalyzes the addition and repair of the essential 3'-terminal CCA sequence in tRNAs without using a nucleic acid template. Adds these three nucleotides in the order of C, C, and A to the tRNA nucleotide-73, using CTP and ATP as substrates and producing inorganic pyrophosphate. tRNA 3'-terminal CCA addition is required both for tRNA processing and repair. Also involved in tRNA surveillance by mediating tandem CCA addition to generate a CCACCA at the 3' terminus of unstable tRNAs. While stable tRNAs receive only 3'-terminal CCA, unstable tRNAs are marked with CCACCA and rapidly degraded. The chain is CCA-adding enzyme from Lactococcus lactis subsp. lactis (strain IL1403) (Streptococcus lactis).